A 245-amino-acid polypeptide reads, in one-letter code: 1-(5-phosphoribosyl)-5-[(5-phosphoribosylamino)methylideneamino] imidazole-4-carboxamide isomerase (245 aa).

Catalysis depends on Asp7, which acts as the Proton acceptor. The Proton donor role is filled by Asp129.

It belongs to the HisA/HisF family.

The protein localises to the cytoplasm. It carries out the reaction 1-(5-phospho-beta-D-ribosyl)-5-[(5-phospho-beta-D-ribosylamino)methylideneamino]imidazole-4-carboxamide = 5-[(5-phospho-1-deoxy-D-ribulos-1-ylimino)methylamino]-1-(5-phospho-beta-D-ribosyl)imidazole-4-carboxamide. Its pathway is amino-acid biosynthesis; L-histidine biosynthesis; L-histidine from 5-phospho-alpha-D-ribose 1-diphosphate: step 4/9. This Edwardsiella ictaluri (strain 93-146) protein is 1-(5-phosphoribosyl)-5-[(5-phosphoribosylamino)methylideneamino] imidazole-4-carboxamide isomerase.